The sequence spans 112 residues: Cornifelin homolog (112 aa).

Belongs to the cornifelin family.

The protein is Cornifelin homolog (cnfn) of Danio rerio (Zebrafish).